The primary structure comprises 140 residues: Putative pre-16S rRNA nuclease (140 aa).

This sequence belongs to the YqgF nuclease family.

Its subcellular location is the cytoplasm. In terms of biological role, could be a nuclease involved in processing of the 5'-end of pre-16S rRNA. The sequence is that of Putative pre-16S rRNA nuclease from Lachnospira eligens (strain ATCC 27750 / DSM 3376 / VPI C15-48 / C15-B4) (Eubacterium eligens).